A 362-amino-acid polypeptide reads, in one-letter code: HLA class I histocompatibility antigen, B alpha chain (362 aa).

Residues 1-24 (MLVMAPRTVLLLLSAALALTETWA) form the signal peptide. Residues 3-11 (VMAPRTVLL) form a VL9 epitope region. The alpha-1 stretch occupies residues 25–114 (GSHSMRYFYT…LRGYYNQSEA (90 aa)). The Extracellular segment spans residues 25 to 309 (GSHSMRYFYT…PSSQSTVPIV (285 aa)). Asn-87 contributes to the a peptide antigen binding site. A Bw6 motif motif is present at residues 101-107 (SLRNLRG). Tyr-108 lines the a peptide antigen pocket. Asn-110 carries an N-linked (GlcNAc...) asparagine glycan. The segment at 115-206 (GSHTLQSMYG…ENGKDKLERA (92 aa)) is alpha-2. A disulfide bridge links Cys-125 with Cys-188. A peptide antigen is bound by residues Thr-167, Lys-170, Glu-176, Tyr-183, and Tyr-195. An alpha-3 region spans residues 207 to 298 (DPPKTHVTHH…GLPKPLTLRW (92 aa)). One can recognise an Ig-like C1-type domain in the interval 209 to 295 (PKTHVTHHPI…QHEGLPKPLT (87 aa)). Cysteines 227 and 283 form a disulfide. A connecting peptide region spans residues 299–309 (EPSSQSTVPIV). The chain crosses the membrane as a helical span at residues 310–333 (GIVAGLAVLAVVVIGAVVAAVMCR). Residues 334–362 (RKSSGGKGGSYSQAACSDSAQGSDVSLTA) lie on the Cytoplasmic side of the membrane. The tract at residues 337–362 (SGGKGGSYSQAACSDSAQGSDVSLTA) is disordered. The span at 346-362 (QAACSDSAQGSDVSLTA) shows a compositional bias: polar residues.

In terms of assembly, heterotrimer that consists of an alpha chain HLA-B, a beta chain B2M and a peptide (peptide-HLA-B-B2M). Early in biogenesis, HLA-B-B2M dimer interacts with the components of the peptide-loading complex composed of TAPBP, TAP1-TAP2, TAPBPL, PDIA3/ERP57 and CALR. Interacts with TAP1-TAP2 transporter via TAPBP; this interaction is obligatory for the loading of peptide epitopes delivered to the ER by TAP1-TAP2 transporter. Interacts with TAPBPL; TAPBPL binds peptide-free HLA-B-B2M complexes or those loaded with low affinity peptides, likely facilitating peptide exchange for higher affinity peptides. Only optimally assembled peptide-HLA-B-B2M trimer translocates to the surface of antigen-presenting cells, where it interacts with TCR and CD8 coreceptor on the surface of T cells. HLA-B (via polymorphic alpha-1 and alpha-2 domains) interacts with antigen-specific TCR (via CDR1, CDR2 and CDR3 domains). One HLA-B molecule (mainly via nonpolymorphic alpha-3 domain) interacts with one CD8A homodimer (via CDR-like loop); this interaction ensures peptide-HLA-B-B2M recognition by CD8-positive T cells only. Allele B*57:01 interacts (via Bw4 motif) with KIR3DL1 (via Ig-like C2-type domain); this interaction may interfere with peptide binding. Allele B*46:01 interacts with KIR2DL3. (Microbial infection) Interacts with HTLV-1 accessory protein p12I.

The protein localises to the cell membrane. It is found in the endoplasmic reticulum membrane. Its function is as follows. Antigen-presenting major histocompatibility complex class I (MHCI) molecule. In complex with B2M/beta 2 microglobulin displays primarily viral and tumor-derived peptides on antigen-presenting cells for recognition by alpha-beta T cell receptor (TCR) on HLA-B-restricted CD8-positive T cells, guiding antigen-specific T cell immune response to eliminate infected or transformed cells. May also present self-peptides derived from the signal sequence of secreted or membrane proteins, although T cells specific for these peptides are usually inactivated to prevent autoreactivity. Both the peptide and the MHC molecule are recognized by TCR, the peptide is responsible for the fine specificity of antigen recognition and MHC residues account for the MHC restriction of T cells. Typically presents intracellular peptide antigens of 8 to 13 amino acids that arise from cytosolic proteolysis via constitutive proteasome and IFNG-induced immunoproteasome. Can bind different peptides containing allele-specific binding motifs, which are mainly defined by anchor residues at position 2 and 9. Allele B*07:02: Displays peptides sharing a common signature motif, namely a Pro residue at position 2 and mainly a Leu anchor residue at the C-terminus. Presents a long peptide (APRGPHGGAASGL) derived from the cancer-testis antigen CTAG1A/NY-ESO-1, eliciting a polyclonal CD8-positive T cell response against tumor cells. Presents viral epitopes derived from HIV-1 gag-pol (TPQDLNTML) and Nef (RPQVPLRPM). Presents an immunodominant epitope derived from SARS-CoV-2 N/nucleoprotein (SPRWYFYYL). Displays self-peptides including a peptide derived from the signal sequence of HLA-DPB1 (APRTVALTA). In terms of biological role, allele B*08:01: Presents to CD8-positive T cells viral epitopes derived from EBV/HHV-4 EBNA3 (QAKWRLQTL), eliciting cytotoxic T cell response. Functionally, allele B*13:02: Presents multiple HIV-1 epitopes derived from gag (RQANFLGKI, GQMREPRGSDI), nef (RQDILDLWI), gag-pol (RQYDQILIE, GQGQWTYQI) and rev (LQLPPLERL), all having in common a Gln residue at position 2 and mainly hydrophobic amino acids Leu, Ile or Val at the C-terminus. Associated with successful control of HIV-1 infection. Its function is as follows. Allele B*18:01: Preferentially presents octomeric and nonameric peptides sharing a common motif, namely a Glu at position 2 and Phe or Tyr anchor residues at the C-terminus. Presents an EBV/HHV-4 epitope derived from BZLF1 (SELEIKRY). May present to CD8-positive T cells an antigenic peptide derived from MAGEA3 (MEVDPIGHLY), triggering an anti-tumor immune response. May display a broad repertoire of self-peptides with a preference for peptides derived from RNA-binding proteins. Allele B*27:05: Presents to CD8-positive T cells immunodominant viral epitopes derived from HCV POLG (ARMILMTHF), HIV-1 gag (KRWIILGLNK), IAV NP (SRYWAIRTR), SARS-CoV-2 N/nucleoprotein (QRNAPRITF), EBV/HHV-4 EBNA4 (HRCQAIRKK) and EBV/HHV-4 EBNA6 (RRIYDLIEL), conferring longterm protection against viral infection. Can present self-peptides derived from cytosolic and nuclear proteins. All peptides carry an Arg at position 2. The peptide-bound form interacts with NK cell inhibitory receptor KIR3DL1 and inhibits NK cell activation in a peptide-specific way, being particularly sensitive to the nature of the amino acid side chain at position 8 of the antigenic peptide. KIR3DL1 fails to recognize HLA-B*27:05 in complex with B2M and EBV/HHV-4 EBNA6 (RRIYDLIEL) peptide, which can lead to increased activation of NK cells during infection. May present an altered repertoire of peptides in the absence of TAP1-TAP2 and TAPBPL. In terms of biological role, allele B*40:01: Presents immunodominant viral epitopes derived from EBV/HHV-4 LMP2 (IEDPPFNSL) and SARS-CoV-2 N/nucleoprotein (MEVTPSGTWL), triggering memory CD8-positive T cell response. Displays self-peptides sharing a signature motif, namely a Glu at position 2 and a Leu anchor residue at the C-terminus. Functionally, allele B*41:01: Displays self-peptides sharing a signature motif, namely a Glu at position 2 and Ala or Pro anchor residues at the C-terminus. Its function is as follows. Allele B*44:02: Presents immunodominant viral epitopes derived from EBV/HHV-4 EBNA4 (VEITPYKPTW) and EBNA6 (AEGGVGWRHW, EENLLDFVRF), triggering memory CD8-positive T cell response. Displays self-peptides sharing a signature motif, namely a Glu at position 2 and Phe, Tyr or Trp anchor residues at the C-terminus. Allele B*45:01: Displays self-peptides sharing a signature motif, namely a Glu at position 2 and Ala or Pro anchor residues at the C-terminus. In terms of biological role, allele B*46:01: Preferentially presents nonameric peptides sharing a signature motif, namely Ala and Leu at position 2 and Tyr, Phe, Leu, or Met anchor residues at the C-terminus. The peptide-bound form interacts with KIR2DL3 and inhibits NK cell cytotoxic response in a peptide-specific way. Functionally, allele B*47:01: Displays self-peptides sharing a signature motif, namely an Asp at position 2 and Leu or Met anchor residues at the C-terminus. Its function is as follows. Allele B*49:01: Displays self-peptides sharing a signature motif, namely a Glu at position 2 and Ile or Val anchor residues at the C-terminus. Allele B*50:01: Displays self-peptides sharing a signature motif, namely a Glu at position 2 and Ala or Pro anchor residues at the C-terminus. In terms of biological role, allele B*51:01: Presents an octomeric HIV-1 epitope derived from gag-pol (TAFTIPSI) to the public TRAV17/TRBV7-3 TCR clonotype, strongly suppressing HIV-1 replication. Functionally, allele B*54:01: Displays peptides sharing a common signature motif, namely a Pro residue at position 2 and Ala anchor residue at the C-terminus. Its function is as follows. Allele B*55:01: Displays peptides sharing a common signature motif, namely a Pro residue at position 2 and Ala anchor residue at the C-terminus. Allele B*56:01: Displays peptides sharing a common signature motif, namely a Pro residue at position 2 and Ala anchor residue at the C-terminus. In terms of biological role, allele B*57:01: The peptide-bound form recognizes KIR3DL1 and inhibits NK cell cytotoxic response. Presents HIV gag peptides (immunodominant KAFSPEVIPMF and subdominant KALGPAATL epitopes) predominantly to CD8-positive T cell clones expressing a TRAV41-containing TCR, triggering HLA-B-restricted T cell responses. Functionally, allele B*67:01: Displays peptides sharing a common signature motif, namely a Pro residue at position 2 and Leu anchor residue at the C-terminus. This is HLA class I histocompatibility antigen, B alpha chain from Homo sapiens (Human).